The chain runs to 230 residues: Androgen-dependent TFPI-regulating protein (230 aa).

Topologically, residues 1-7 (MTKTTTC) are cytoplasmic. Residues 8-28 (LYHFVVLNWYIFLNYYIPQIG) form a helical membrane-spanning segment. At 29 to 45 (KDEEKLKEFHDGGRSKY) the chain is on the extracellular side. The helical transmembrane segment at 46–66 (LTLLNLLLQAVFFGVACLDDV) threads the bilayer. The Cytoplasmic segment spans residues 67–85 (LKRVIGRKDIKFITYFRDL). A helical membrane pass occupies residues 86–106 (LFTTLAFPLSTFVFLVFWSLF). Over 107–120 (HYDRSLVYPKGLDD) the chain is Extracellular. Residues 121–141 (FFPAWVNHAMHTSIFPFSLAE) form a helical membrane-spanning segment. Residues 142-155 (TVLRPHNYPSKKLG) lie on the Cytoplasmic side of the membrane. Residues 156 to 173 (LSLLGACNFAYIIRILWR) traverse the membrane as a helical segment. Over 174 to 190 (YVQTGNWVYPVFASLSP) the chain is Extracellular. The chain crosses the membrane as a helical span at residues 191 to 211 (LGIILFFSASYILSASLYLFG). Over 212–230 (EKINHWKWGATVKPRMKKN) the chain is Cytoplasmic.

Belongs to the AIG1 family.

It localises to the cell membrane. The catalysed reaction is 9-hexadecanoyloxy-octadecanoate + H2O = 9-hydroxy-octadecanoate + hexadecanoate + H(+). It catalyses the reaction 12-hexadecanoyloxy-octadecanoate + H2O = 12-hydroxyoctadecanoate + hexadecanoate + H(+). The enzyme catalyses 9-(9Z-hexadecenoyloxy)-octadecanoate + H2O = (9Z)-hexadecenoate + 9-hydroxy-octadecanoate + H(+). It carries out the reaction 12-(9Z-hexadecenoyloxy)-octadecanoate + H2O = 12-hydroxyoctadecanoate + (9Z)-hexadecenoate + H(+). The catalysed reaction is 13-(9Z-hexadecenoyloxy)-octadecanoate + H2O = 13-hydroxy-octadecanoate + (9Z)-hexadecenoate + H(+). It catalyses the reaction 9-octadecanoyloxy-octadecanoate + H2O = 9-hydroxy-octadecanoate + octadecanoate + H(+). The enzyme catalyses 12-octadecanoyloxy-octadecanoate + H2O = 12-hydroxyoctadecanoate + octadecanoate + H(+). It carries out the reaction 13-octadecanoyloxy-octadecanoate + H2O = 13-hydroxy-octadecanoate + octadecanoate + H(+). The catalysed reaction is 9-(9Z-octadecenoyloxy)-octadecanoate + H2O = 9-hydroxy-octadecanoate + (9Z)-octadecenoate + H(+). It catalyses the reaction 12-(9Z-octadecenoyloxy)-octadecanoate + H2O = 12-hydroxyoctadecanoate + (9Z)-octadecenoate + H(+). The enzyme catalyses 13-(9Z-octadecenoyloxy)-octadecanoate + H2O = 13-hydroxy-octadecanoate + (9Z)-octadecenoate + H(+). It carries out the reaction 5-(9Z-octadecenoyloxy)-octadecanoate + H2O = 5-hydroxy-octadecanoate + (9Z)-octadecenoate + H(+). Its function is as follows. Hydrolyzes bioactive fatty-acid esters of hydroxy-fatty acids (FAHFAs), but not other major classes of lipids. Shows a preference for FAHFAs with branching distal from the carboxylate head group of the lipids. Regulates the expression and the cell-associated anticoagulant activity of the inhibitor TFPI in endothelial cells (in vitro). The sequence is that of Androgen-dependent TFPI-regulating protein (Adtrp) from Rattus norvegicus (Rat).